The sequence spans 147 residues: Hemoglobin subunit beta-M (147 aa).

N-acetylvaline is present on Val2. The Globin domain maps to 3-147; it reads HLTSEEKNCI…VAHALAHKYH (145 aa). Thr13 is subject to Phosphothreonine. The residue at position 45 (Ser45) is a Phosphoserine. The residue at position 60 (Lys60) is an N6-acetyllysine. A heme b-binding site is contributed by His64. An N6-acetyllysine modification is found at Lys83. A heme b-binding site is contributed by His93. Residue Cys94 is modified to S-nitrosocysteine. Lys145 bears the N6-acetyllysine mark.

Belongs to the globin family. Heterotetramer of two alpha chains and two beta chains. As to expression, red blood cells.

In terms of biological role, involved in oxygen transport from the lung to the various peripheral tissues. The polypeptide is Hemoglobin subunit beta-M (HBB) (Didelphis virginiana (North American opossum)).